Here is a 467-residue protein sequence, read N- to C-terminus: Argininosuccinate lyase (467 aa).

It belongs to the lyase 1 family. Argininosuccinate lyase subfamily.

The protein localises to the cytoplasm. It carries out the reaction 2-(N(omega)-L-arginino)succinate = fumarate + L-arginine. The protein operates within amino-acid biosynthesis; L-arginine biosynthesis; L-arginine from L-ornithine and carbamoyl phosphate: step 3/3. This is Argininosuccinate lyase from Methylibium petroleiphilum (strain ATCC BAA-1232 / LMG 22953 / PM1).